Here is a 530-residue protein sequence, read N- to C-terminus: UPF0422 protein lpl2888 (530 aa).

Residues 1-19 (MKFKKIILALACLSSPLYA) form the signal peptide. Residues 20–66 (DQDQQLKSEIQRLQHQAEDLQAQLNRLQKQLANHKSSQQKHEQQAAT) adopt a coiled-coil conformation. The segment at 50-81 (LANHKSSQQKHEQQAATKPAEPQSKPTVKSGA) is disordered.

The protein belongs to the UPF0422 family.

This Legionella pneumophila (strain Lens) protein is UPF0422 protein lpl2888.